We begin with the raw amino-acid sequence, 491 residues long: Glutamate--tRNA ligase (491 aa).

The 'HIGH' region motif lies at Pro13–Asn23. Cys110, Cys112, Cys137, and His139 together coordinate Zn(2+). The 'KMSKS' region motif lies at Lys254–Arg258. Residue Lys257 participates in ATP binding.

Belongs to the class-I aminoacyl-tRNA synthetase family. Glutamate--tRNA ligase type 1 subfamily. As to quaternary structure, monomer. Zn(2+) is required as a cofactor.

It localises to the cytoplasm. It catalyses the reaction tRNA(Glu) + L-glutamate + ATP = L-glutamyl-tRNA(Glu) + AMP + diphosphate. In terms of biological role, catalyzes the attachment of glutamate to tRNA(Glu) in a two-step reaction: glutamate is first activated by ATP to form Glu-AMP and then transferred to the acceptor end of tRNA(Glu). The sequence is that of Glutamate--tRNA ligase from Listeria monocytogenes serotype 4b (strain F2365).